The sequence spans 422 residues: uncharacterized protein (422 aa).

Belongs to the asfivirus K421R family.

It localises to the virion. This is an uncharacterized protein from Ornithodoros (relapsing fever ticks).